The chain runs to 3078 residues: Probable polyketide synthase 34 (3078 aa).

Positions S28 to E462 constitute a Ketosynthase family 3 (KS3) domain. Active-site for beta-ketoacyl synthase activity residues include C200, H339, and H385. Positions G665 to Y698 are acyl/malonyl transferase. S675 serves as the catalytic For acyl/malonyl transferase activity. The tract at residues H954–I1083 is N-terminal hotdog fold. Residues H954 to S1264 form the PKS/mFAS DH domain. The active-site Proton acceptor; for dehydratase activity is H995. Positions N1099–S1264 are C-terminal hotdog fold. D1171 serves as the catalytic Proton donor; for dehydratase activity. The segment at N1375–G1396 is disordered. The 78-residue stretch at D2541–H2618 folds into the Carrier domain. An O-(pantetheine 4'-phosphoryl)serine modification is found at S2578. 2 disordered regions span residues A2617 to N2640 and N2739 to S2761. The segment covering N2619 to N2640 has biased composition (low complexity). Residues N2621–F2652 are a coiled coil.

The cofactor is pantetheine 4'-phosphate.

Its function is as follows. Probable polyketide synthase. The sequence is that of Probable polyketide synthase 34 (pks34) from Dictyostelium discoideum (Social amoeba).